Here is a 307-residue protein sequence, read N- to C-terminus: Coenzyme PQQ synthesis protein B (307 aa).

Belongs to the PqqB family.

It participates in cofactor biosynthesis; pyrroloquinoline quinone biosynthesis. Its function is as follows. May be involved in the transport of PQQ or its precursor to the periplasm. This is Coenzyme PQQ synthesis protein B from Gluconacetobacter diazotrophicus (strain ATCC 49037 / DSM 5601 / CCUG 37298 / CIP 103539 / LMG 7603 / PAl5).